A 181-amino-acid chain; its full sequence is Transcriptional repressor NrdR (181 aa).

Residues 3-34 fold into a zinc finger; sequence CLFCQHTDTRVIDSRVSEDGATIRRRRECEAC. The region spanning 49–139 is the ATP-cone domain; sequence PVIIKKDGGR…VYRSFQDVAD (91 aa).

It belongs to the NrdR family. Zn(2+) serves as cofactor.

Negatively regulates transcription of bacterial ribonucleotide reductase nrd genes and operons by binding to NrdR-boxes. This is Transcriptional repressor NrdR from Xylella fastidiosa (strain M12).